The primary structure comprises 283 residues: MFRDVLKTLPQYLIPKHGITALAGYFADVKNPRLKNFLIQNFIRKFDVDMSEALIEDPKSYDCFNDFFIRHLKPECRPLSQSDVICPVDGCISEIGKIERGQLLQAKGKYYSVQELLACDGQLAEQFVQGQFATLYLSPKDYHRVHMPIDAELVSMTYIPGALFSVQPATTRVVPKLFARNERLAIFFKTKIGPMVMVMVGATIVGAIGTSWHGDVKRSKELERFDYSEQFLDKIISQGSEMGYFKLGSTVVLLFANGEKIQWDKELLAGSKIQLGKPMAIIT.

Catalysis depends on charge relay system; for autoendoproteolytic cleavage activity residues Asp89, His146, and Ser249. Ser249 (schiff-base intermediate with substrate; via pyruvic acid; for decarboxylase activity) is an active-site residue. A Pyruvic acid (Ser); by autocatalysis modification is found at Ser249.

The protein belongs to the phosphatidylserine decarboxylase family. PSD-B subfamily. Prokaryotic type I sub-subfamily. In terms of assembly, heterodimer of a large membrane-associated beta subunit and a small pyruvoyl-containing alpha subunit. Pyruvate serves as cofactor. Post-translationally, is synthesized initially as an inactive proenzyme. Formation of the active enzyme involves a self-maturation process in which the active site pyruvoyl group is generated from an internal serine residue via an autocatalytic post-translational modification. Two non-identical subunits are generated from the proenzyme in this reaction, and the pyruvate is formed at the N-terminus of the alpha chain, which is derived from the carboxyl end of the proenzyme. The autoendoproteolytic cleavage occurs by a canonical serine protease mechanism, in which the side chain hydroxyl group of the serine supplies its oxygen atom to form the C-terminus of the beta chain, while the remainder of the serine residue undergoes an oxidative deamination to produce ammonia and the pyruvoyl prosthetic group on the alpha chain. During this reaction, the Ser that is part of the protease active site of the proenzyme becomes the pyruvoyl prosthetic group, which constitutes an essential element of the active site of the mature decarboxylase.

The protein resides in the cell membrane. The catalysed reaction is a 1,2-diacyl-sn-glycero-3-phospho-L-serine + H(+) = a 1,2-diacyl-sn-glycero-3-phosphoethanolamine + CO2. The protein operates within phospholipid metabolism; phosphatidylethanolamine biosynthesis; phosphatidylethanolamine from CDP-diacylglycerol: step 2/2. Its function is as follows. Catalyzes the formation of phosphatidylethanolamine (PtdEtn) from phosphatidylserine (PtdSer). The sequence is that of Phosphatidylserine decarboxylase proenzyme from Legionella pneumophila subsp. pneumophila (strain Philadelphia 1 / ATCC 33152 / DSM 7513).